Consider the following 83-residue polypeptide: Cytochrome b559 subunit alpha (83 aa).

The chain crosses the membrane as a helical span at residues 21–35 (VIHSITIPSLFIAGW). Heme is bound at residue His23.

This sequence belongs to the PsbE/PsbF family. In terms of assembly, heterodimer of an alpha subunit and a beta subunit. PSII is composed of 1 copy each of membrane proteins PsbA, PsbB, PsbC, PsbD, PsbE, PsbF, PsbH, PsbI, PsbJ, PsbK, PsbL, PsbM, PsbT, PsbX, PsbY, PsbZ, Psb30/Ycf12, at least 3 peripheral proteins of the oxygen-evolving complex and a large number of cofactors. It forms dimeric complexes. Requires heme b as cofactor.

Its subcellular location is the plastid membrane. Functionally, this b-type cytochrome is tightly associated with the reaction center of photosystem II (PSII). PSII is a light-driven water:plastoquinone oxidoreductase that uses light energy to abstract electrons from H(2)O, generating O(2) and a proton gradient subsequently used for ATP formation. It consists of a core antenna complex that captures photons, and an electron transfer chain that converts photonic excitation into a charge separation. This Cuscuta reflexa (Southern Asian dodder) protein is Cytochrome b559 subunit alpha.